Reading from the N-terminus, the 346-residue chain is NADH-quinone oxidoreductase subunit H 2 (346 aa).

Transmembrane regions (helical) follow at residues 14–34, 83–103, 136–156, 172–192, 208–228, 260–280, 289–309, and 324–344; these read IAMV…VAYA, FAFL…FAVI, VGVL…VLAG, SAQM…VFML, GAWY…CSIA, FFMA…TLFL, LPGW…CMWI, and LGWK…GIIV.

Belongs to the complex I subunit 1 family. In terms of assembly, NDH-1 is composed of 14 different subunits. Subunits NuoA, H, J, K, L, M, N constitute the membrane sector of the complex.

It localises to the cell inner membrane. It catalyses the reaction a quinone + NADH + 5 H(+)(in) = a quinol + NAD(+) + 4 H(+)(out). NDH-1 shuttles electrons from NADH, via FMN and iron-sulfur (Fe-S) centers, to quinones in the respiratory chain. The immediate electron acceptor for the enzyme in this species is believed to be ubiquinone. Couples the redox reaction to proton translocation (for every two electrons transferred, four hydrogen ions are translocated across the cytoplasmic membrane), and thus conserves the redox energy in a proton gradient. This subunit may bind ubiquinone. This is NADH-quinone oxidoreductase subunit H 2 from Geobacter metallireducens (strain ATCC 53774 / DSM 7210 / GS-15).